Consider the following 475-residue polypeptide: MKMLSTKATCNSHGQDSSYFLGWEAYENNPFHHTSNPNGIIQMGLAENQLSFDLLESWLSKNPDAASFKRDGKSIFRELALFQDYHGLPAFKKALVEFMAEIRGNKVSFEANNIVLTAGATSANETLMFCLAEAGDAFLLPTPYYPGFDRDLKWRTGVEIVPIHCTSSNGFQITQSALEQAYKDAQTRNLRVKGVLVTNPSNPLGTTMNRDELNLVFDFITSKGIHLISDEIYSGTVFGSPGFVSAMEVLKERSSEDEEVWKRVHIVYSLSKDLGLPGFRVGAIYSNDDMVVAAATKMSSFGLVSSQTQYLLSAMLSDKKFTISYISENQKRLKQRQKMLVSGLQKAGINCLDSNAGLFCWVDMRHLLESDKFESELELWKKIVYEVGLNISPGSSCHCTEPGWFRVCFANMSESTLKLAVRRLKSFVTELRSTTTSNHRNHDNKICKNIKKNIFTKWVFRQSAQEANRKMQAER.

Position 272 is an N6-(pyridoxal phosphate)lysine (lysine 272).

It belongs to the class-I pyridoxal-phosphate-dependent aminotransferase family. As to quaternary structure, homodimer. Pyridoxal 5'-phosphate serves as cofactor.

The enzyme catalyses S-adenosyl-L-methionine = 1-aminocyclopropane-1-carboxylate + S-methyl-5'-thioadenosine + H(+). It functions in the pathway alkene biosynthesis; ethylene biosynthesis via S-adenosyl-L-methionine; ethylene from S-adenosyl-L-methionine: step 1/2. Catalyzes the formation of 1-aminocyclopropane-1-carboxylate, a direct precursor of ethylene in higher plants. The chain is 1-aminocyclopropane-1-carboxylate synthase CMA101 (ACS2) from Cucurbita maxima (Pumpkin).